We begin with the raw amino-acid sequence, 106 residues long: Iron-sulfur cluster assembly protein CyaY (106 aa).

It belongs to the frataxin family.

In terms of biological role, involved in iron-sulfur (Fe-S) cluster assembly. May act as a regulator of Fe-S biogenesis. The sequence is that of Iron-sulfur cluster assembly protein CyaY from Pectobacterium atrosepticum (strain SCRI 1043 / ATCC BAA-672) (Erwinia carotovora subsp. atroseptica).